A 433-amino-acid polypeptide reads, in one-letter code: Tol-Pal system protein TolB (433 aa).

Residues 1–21 (MIKRLRGLLVLLCCVAGMAMA) form the signal peptide.

It belongs to the TolB family. The Tol-Pal system is composed of five core proteins: the inner membrane proteins TolA, TolQ and TolR, the periplasmic protein TolB and the outer membrane protein Pal. They form a network linking the inner and outer membranes and the peptidoglycan layer.

The protein localises to the periplasm. Its function is as follows. Part of the Tol-Pal system, which plays a role in outer membrane invagination during cell division and is important for maintaining outer membrane integrity. This is Tol-Pal system protein TolB from Pseudomonas entomophila (strain L48).